An 848-amino-acid chain; its full sequence is Xylosyltransferase (848 aa).

At 1 to 14 (MSLHRTLRRFLRKW) the chain is on the cytoplasmic side. Residues 15–35 (KALVYAVSFILLIQAFFTFQS) traverse the membrane as a helical; Signal-anchor for type II membrane protein segment. Over 36–843 (SPNLMEEEHL…PKTELISVKP (808 aa)) the chain is Lumenal. 4 disulfides stabilise this stretch: Cys145-Cys173, Cys189-Cys427, Cys446-Cys459, and Cys448-Cys457. UDP-alpha-D-xylose contacts are provided by residues Val219, Asp247, and 276–278 (TIW). Asn306 carries N-linked (GlcNAc...) asparagine glycosylation. 379–380 (DW) serves as a coordination point for UDP-alpha-D-xylose. UDP-alpha-D-xylose is bound by residues Ser460 and 482-483 (RK). Cystine bridges form between Cys529–Cys811 and Cys794–Cys822. An N-linked (GlcNAc...) asparagine glycan is attached at Asn530. Positions 824–848 (NTNWSSLSPDPKTELISVKPDGRIR) are disordered. Residue Asn826 is glycosylated (N-linked (GlcNAc...) asparagine).

This sequence belongs to the glycosyltransferase 14 family. XylT subfamily. The cofactor is a divalent metal cation.

Its subcellular location is the endoplasmic reticulum membrane. It localises to the golgi apparatus membrane. The catalysed reaction is UDP-alpha-D-xylose + L-seryl-[protein] = 3-O-(beta-D-xylosyl)-L-seryl-[protein] + UDP + H(+). The protein operates within glycan metabolism; chondroitin sulfate biosynthesis. Its pathway is glycan metabolism; heparan sulfate biosynthesis. Its function is as follows. Catalyzes the first step in biosynthesis of glycosaminoglycan. Transfers D-xylose from UDP-D-xylose to specific serine residues of the core protein. Initial enzyme in the biosynthesis of chondroitin sulfate and dermatan sulfate proteoglycans in fibroblasts and chondrocytes. The sequence is that of Xylosyltransferase (xt) from Ciona intestinalis (Transparent sea squirt).